A 986-amino-acid polypeptide reads, in one-letter code: Bone morphogenetic protein 1 (986 aa).

The signal sequence occupies residues 1-22 (MPGVARLPLLLGLLLLPRPGRP). Residues 23–120 (LDLADYTYDL…RWRGRSRSRR (98 aa)) constitute a propeptide that is removed on maturation. A disordered region spans residues 83–125 (SIKAAVPGNTSTPSCQSTNGQPQRGACGRWRGRSRSRRAATSR). Residues 90–104 (GNTSTPSCQSTNGQP) are compositionally biased toward polar residues. N-linked (GlcNAc...) asparagine glycosylation is present at N91. Positions 112 to 122 (WRGRSRSRRAA) are enriched in basic residues. One can recognise a Peptidase M12A domain in the interval 121-320 (AATSRPERVW…AQARKLYKCP (200 aa)). N-linked (GlcNAc...) asparagine glycosylation occurs at N142. Intrachain disulfides connect C163–C319, C183–C205, C185–C186, and C322–C348. H213 is a binding site for Zn(2+). Residue E214 is part of the active site. The Zn(2+) site is built by H217 and H223. CUB domains lie at 322–434 (CGET…YEAI) and 435–546 (CGGD…NFFK). 2 N-linked (GlcNAc...) asparagine glycosylation sites follow: N332 and N363. 15 disulfide bridges follow: C375-C397, C435-C461, C488-C510, C551-C563, C559-C572, C574-C587, C591-C617, C644-C666, C707-C718, C714-C727, C729-C742, C747-C773, C800-C822, C860-C890, and C917-C939. The region spanning 547–588 (EVDECSRPNRGGCEQRCLNTLGSYKCSCDPGYELAPDKRRCE) is the EGF-like 1; calcium-binding domain. The CUB 3 domain occupies 591 to 703 (CGGFLTKLNG…KGFKAHFFSD (113 aa)). N-linked (GlcNAc...) asparagine glycosylation is present at N599. Positions 704 to 743 (KDECSKDNGGCQQDCVNTFGSYECQCRSGFVLHDNKHDCK) constitute an EGF-like 2; calcium-binding domain. CUB domains lie at 747-859 (CDHK…HATE) and 860-976 (CGGQ…YTST). Omega-N-methylarginine occurs at positions 934 and 937.

Interacts with POSTN, the interaction promotes deposition on the extracellular matrix. The cofactor is Zn(2+). Proteolytically activated in the trans-Golgi network by furin-like/paired basic proprotein convertases, cleavage is not required for secretion. Ubiquitous.

Its subcellular location is the golgi apparatus. The protein localises to the trans-Golgi network. The protein resides in the secreted. It localises to the extracellular space. It is found in the extracellular matrix. It catalyses the reaction Cleavage of the C-terminal propeptide at Ala-|-Asp in type I and II procollagens and at Arg-|-Asp in type III.. Activity is increased by the procollagen C-endopeptidase enhancer protein. Functionally, metalloprotease that plays key roles in regulating the formation of the extracellular matrix (ECM) via processing of various precursor proteins into mature functional enzymes or structural proteins. Thereby participates in several developmental and physiological processes such as cartilage and bone formation, muscle growth and homeostasis, wound healing and tissue repair. Roles in ECM formation include cleavage of the C-terminal propeptides from procollagens such as procollagen I, II and III or the proteolytic activation of the enzyme lysyl oxidase LOX, necessary to formation of covalent cross-links in collagen and elastic fibers. Additional substrates include matricellular thrombospondin-1/THBS1 whose cleavage leads to cell adhesion disruption and TGF-beta activation. Plays an important role in bone repair by acting as a coactivator of BMP7. This is Bone morphogenetic protein 1 (BMP1) from Homo sapiens (Human).